The chain runs to 595 residues: Neuroepithelial cell-transforming gene 1 protein (595 aa).

Position 1 is an N-acetylmethionine (M1). The interval 1-42 is disordered; sequence MEPEPAAQKQPRPRRRSRRVSMLSEEPAAGLPADTPGPAANE. The segment at 1–74 is necessary for nuclear localization; it reads MEPEPAAQKQ…LKRKRREKDD (74 aa). Residues 12-19 carry the Nuclear localization signal motif; sequence RPRRRSRR. The residue at position 21 (S21) is a Phosphoserine. A Nuclear localization signal motif is present at residues 66–72; it reads KRKRREK. Phosphoserine occurs at positions 100, 106, and 122. Positions 127-151 are disordered; sequence GDHRSPASAQKSFSRSTVPTPTKRR. Positions 133–146 are enriched in polar residues; the sequence is ASAQKSFSRSTVPT. The DH domain occupies 174-356; the sequence is KRQEAIYELS…QGVLSDINLK (183 aa). Residues 386-501 enclose the PH domain; it reads VLLCHGELKN…WFNCIRAAIA (116 aa). S508 bears the Phosphoserine mark. The interval 555–595 is disordered; it reads CGSSVQTVEDTRNMKAQRPQPGLRRARDKAQSGGKKKETLV.

Interacts with RHOA in its GTP- and GDP-bound states, and with CDC42 in its GTP-bound state. Interacts with the PDZ 1 domain of BAIAP1.

The protein localises to the cytoplasm. Its subcellular location is the nucleus. In terms of biological role, acts as a guanine nucleotide exchange factor (GEF) for RhoA GTPase. May be involved in activation of the SAPK/JNK pathway. Stimulates genotoxic stress-induced RHOB activity in breast cancer cells leading to their cell death. The polypeptide is Neuroepithelial cell-transforming gene 1 protein (Net1) (Mus musculus (Mouse)).